We begin with the raw amino-acid sequence, 116 residues long: Ly-6/neurotoxin-like protein 1 (116 aa).

The signal sequence occupies residues 1–20 (MTHLLTVFLVALMGLPVAQA). One can recognise a UPAR/Ly6 domain in the interval 21–104 (LECHVCAYNG…GFATPVTLAL (84 aa)). Disulfide bonds link Cys-23–Cys-46, Cys-26–Cys-33, Cys-39–Cys-64, Cys-68–Cys-85, and Cys-86–Cys-91. Asn-92 carries the GPI-anchor amidated asparagine lipid modification. A propeptide spans 93–116 (GAGFATPVTLALVPALLATFWSLL) (removed in mature form).

As to quaternary structure, interacts with nAChRs containing alpha-4:beta-2 (CHRNA4:CHRNB2) and alpha-7 (CHRNA7) subunits. Interacts with CHRNA4 probably in the endoplasmic reticulum prior to nAChR pentameric assembly. Interacts with KCNA2/Potassium voltage-gated channel subfamily A member 2. Expressed in neurons of multiple regions in the CNS, including the cerebral cortex, thalamus, substantia nigra, cerebellum, amygdala and hippocampus. Also expressed in kidney, heart and thymus, but at lower levels than in the brain. Expressed in the primary visual cortex (V1) and the lateral geniculate nucleus (at protein level).

Its subcellular location is the cell membrane. The protein localises to the cell projection. It localises to the dendrite. The protein resides in the endoplasmic reticulum. Functionally, acts in different tissues through interaction to nicotinic acetylcholine receptors (nAChRs). The proposed role as modulator of nAChR activity seems to be dependent on the nAChR subtype and stoichiometry, and to involve an effect on nAChR trafficking and its cell surface expression, and on single channel properties of the nAChR inserted in the plasma membrane. Modulates functional properties of nicotinic acetylcholine receptors (nAChRs) to prevent excessive excitation, and hence neurodegeneration. Enhances desensitization by increasing both the rate and extent of desensitization of alpha-4:beta-2-containing nAChRs and slowing recovery from desensitization. Promotes large amplitude ACh-evoked currents through alpha-4:beta-2 nAChRs. Is involved in regulation of the nAChR pentameric assembly in the endoplasmic reticulum. Shifts stoichiometry from high sensitivity alpha-4(2):beta-2(3) to low sensitivity alpha-4(3):beta-2(2) nAChR. In vitro modulates alpha-3:beta-4-containing nAChRs. Reduces cell surface expression of (alpha-3:beta-4)(2):beta-4 and (alpha-3:beta-4)(2):alpha-5 nAChRs suggesting an interaction with nAChR alpha-3(-):(+)beta-4 subunit interfaces and an allosteric mode. Corresponding single channel effects characterized by decreased unitary conductance, altered burst proportions and enhanced desensitization/inactivation seem to depend on nAChR alpha:alpha subunit interfaces and are greater in (alpha-3:beta-2)(2):alpha-3 when compared to (alpha-3:beta-2)(2):alpha-5 nAChRs. Prevents plasticity in the primary visual cortex late in life. In Mus musculus (Mouse), this protein is Ly-6/neurotoxin-like protein 1.